Here is a 270-residue protein sequence, read N- to C-terminus: Hydroxyethylthiazole kinase (270 aa).

Met47 is a substrate binding site. 2 residues coordinate ATP: Arg123 and Thr169. Gly196 contributes to the substrate binding site.

The protein belongs to the Thz kinase family. Mg(2+) is required as a cofactor.

The catalysed reaction is 5-(2-hydroxyethyl)-4-methylthiazole + ATP = 4-methyl-5-(2-phosphooxyethyl)-thiazole + ADP + H(+). Its pathway is cofactor biosynthesis; thiamine diphosphate biosynthesis; 4-methyl-5-(2-phosphoethyl)-thiazole from 5-(2-hydroxyethyl)-4-methylthiazole: step 1/1. Catalyzes the phosphorylation of the hydroxyl group of 4-methyl-5-beta-hydroxyethylthiazole (THZ). The sequence is that of Hydroxyethylthiazole kinase from Roseiflexus castenholzii (strain DSM 13941 / HLO8).